The sequence spans 132 residues: Myelin P2 protein (132 aa).

Residue Ser-2 is modified to N-acetylserine. Arg-107 is a (9Z)-octadecenoate binding site. Arg-107 contacts hexadecanoate. Cys-118 and Cys-125 are disulfide-bonded. Position 127–129 (127–129) interacts with (9Z)-octadecenoate; that stretch reads RIY. A hexadecanoate-binding site is contributed by 127–129; sequence RIY.

Belongs to the calycin superfamily. Fatty-acid binding protein (FABP) family. In terms of assembly, monomer. As to expression, detected in spinal cord (at protein level).

Its subcellular location is the cytoplasm. Its function is as follows. May play a role in lipid transport protein in Schwann cells. May bind cholesterol. This is Myelin P2 protein (PMP2) from Equus caballus (Horse).